Here is a 445-residue protein sequence, read N- to C-terminus: MTHPVVRFAPSPTGRLHVGNVRTALINWMFSRGQQGKFILRIDDTDLERSTAEHEEALKVDLTWLGLTWDDSFSQSHRFANYDAAADKLRALHLLYPCYETAEELDVKRKIAQTRGRPPVYDRAALSLTAQDRADLEAKGRKPHWRFKLSGERVEWNDLVRGPQSIDTASVSDPILIREDGSYLYTLPSVVDDIEAGITHVVRGEDHVTNSGAQIEIFMALGGKAPEMAHTPLLIGADGAALSKRIGSLSMGELRARGYEPMAICSHLAKLGTSDNIEARATLEQLCEEFSFSKIGRAPARFDDNDLNALNAALVHAMPFEAVRERLITLDARAASEPFWLAVRENCTFVADAISWVDMVYGSPAPLVAEEDREFISGAAMYLPEGELTTESWSAWTNALKAATGRKGRGLFMPLRKALTGAEHGPEMSAVLPLIGREKVLQRLS.

A 'HIGH' region motif is present at residues 10-20; it reads PSPTGRLHVGN. Positions 241-245 match the 'KMSKS' region motif; sequence ALSKR. Lysine 244 is a binding site for ATP.

It belongs to the class-I aminoacyl-tRNA synthetase family. Glutamate--tRNA ligase type 1 subfamily. As to quaternary structure, monomer.

It localises to the cytoplasm. It carries out the reaction tRNA(Glu) + L-glutamate + ATP = L-glutamyl-tRNA(Glu) + AMP + diphosphate. In terms of biological role, catalyzes the attachment of glutamate to tRNA(Glu) in a two-step reaction: glutamate is first activated by ATP to form Glu-AMP and then transferred to the acceptor end of tRNA(Glu). This Hyphomonas neptunium (strain ATCC 15444) protein is Glutamate--tRNA ligase 2.